Reading from the N-terminus, the 309-residue chain is Dihydroorotate dehydrogenase B (NAD(+)), catalytic subunit (309 aa).

FMN contacts are provided by residues serine 21 and 45-46 (KA). Substrate contacts are provided by residues lysine 45 and 69–73 (NAIGL). FMN is bound by residues asparagine 99 and asparagine 127. Residue asparagine 127 participates in substrate binding. The active-site Nucleophile is cysteine 130. Positions 165 and 191 each coordinate FMN. 192–193 (NT) provides a ligand contact to substrate. Residues glycine 217, 243 to 244 (GG), and 265 to 266 (GT) each bind FMN.

This sequence belongs to the dihydroorotate dehydrogenase family. Type 1 subfamily. As to quaternary structure, heterotetramer of 2 PyrK and 2 PyrD type B subunits. It depends on FMN as a cofactor.

Its subcellular location is the cytoplasm. It catalyses the reaction (S)-dihydroorotate + NAD(+) = orotate + NADH + H(+). The protein operates within pyrimidine metabolism; UMP biosynthesis via de novo pathway; orotate from (S)-dihydroorotate (NAD(+) route): step 1/1. In terms of biological role, catalyzes the conversion of dihydroorotate to orotate with NAD(+) as electron acceptor. This chain is Dihydroorotate dehydrogenase B (NAD(+)), catalytic subunit (pyrD), found in Bacillus thuringiensis (strain Al Hakam).